Here is a 359-residue protein sequence, read N- to C-terminus: Tropomodulin-1 (359 aa).

The interval 39–61 is disordered; sequence PDNALLPAGLRQKDQTTKAPTGP. Residues 39–138 form a tropomyosin-binding region; that stretch reads PDNALLPAGL…CDIAAILGMH (100 aa).

The protein belongs to the tropomodulin family. As to quaternary structure, binds to the N-terminus of tropomyosin and to actin. Interacts with FLII.

Its subcellular location is the cytoplasm. The protein localises to the cytoskeleton. In terms of biological role, blocks the elongation and depolymerization of the actin filaments at the pointed end. The Tmod/TM complex contributes to the formation of the short actin protofilament, which in turn defines the geometry of the membrane skeleton. May play an important role in regulating the organization of actin filaments by preferentially binding to a specific tropomyosin isoform at its N-terminus. The sequence is that of Tropomodulin-1 (TMOD1) from Bos taurus (Bovine).